A 476-amino-acid chain; its full sequence is Proline--tRNA ligase 2 (476 aa).

It belongs to the class-II aminoacyl-tRNA synthetase family. ProS type 3 subfamily. In terms of assembly, homodimer.

Its subcellular location is the cytoplasm. It catalyses the reaction tRNA(Pro) + L-proline + ATP = L-prolyl-tRNA(Pro) + AMP + diphosphate. Functionally, catalyzes the attachment of proline to tRNA(Pro) in a two-step reaction: proline is first activated by ATP to form Pro-AMP and then transferred to the acceptor end of tRNA(Pro). In Bacillus cereus (strain ATCC 10987 / NRS 248), this protein is Proline--tRNA ligase 2.